Consider the following 272-residue polypeptide: Acetylglutamate kinase (272 aa).

Substrate contacts are provided by residues 41–42 (GG), arginine 63, and asparagine 166.

Belongs to the acetylglutamate kinase family. ArgB subfamily.

It is found in the cytoplasm. It carries out the reaction N-acetyl-L-glutamate + ATP = N-acetyl-L-glutamyl 5-phosphate + ADP. It functions in the pathway amino-acid biosynthesis; L-arginine biosynthesis; N(2)-acetyl-L-ornithine from L-glutamate: step 2/4. Catalyzes the ATP-dependent phosphorylation of N-acetyl-L-glutamate. In Anaeromyxobacter dehalogenans (strain 2CP-1 / ATCC BAA-258), this protein is Acetylglutamate kinase.